A 214-amino-acid chain; its full sequence is Dynein axonemal assembly factor 6 (214 aa).

Disordered regions lie at residues 1–22 and 34–68; these read MESE…QNVD and ALSK…NIGP.

This sequence belongs to the PIH1 family. In terms of assembly, interacts with HSPA1A/B and HSP90AA1. Interacts with DNAAF2 and DNAAF4. Interacts wuth DNAI2. In terms of tissue distribution, expressed in testis, small intestine, prostate, adrenal gland, spleen, lung, bladder, breast and ovary. Expressed in ciliated epithelial cells.

The protein resides in the cytoplasm. It is found in the golgi apparatus. The protein localises to the trans-Golgi network. Functionally, plays a role in cytoplasmic pre-assembly of axonemal dynein. This is Dynein axonemal assembly factor 6 from Homo sapiens (Human).